We begin with the raw amino-acid sequence, 581 residues long: Kelch-like protein 30 (581 aa).

The 68-residue stretch at 33–100 (ADVTLLVGDQ…VYTGRLTITQ (68 aa)) folds into the BTB domain. One can recognise a BACK domain in the interval 135–237 (CLGICEFGEQ…PRPCVQQLLA (103 aa)). Kelch repeat units lie at residues 280 to 327 (EEDE…ALNS), 328 to 378 (DVYV…ALNG), 379 to 423 (EIYA…GCQG), 425 to 472 (LYLV…ALNG), 474 to 514 (LYLI…PLGD), and 515 to 564 (LLYV…TIFL).

This chain is Kelch-like protein 30 (Klhl30), found in Mus musculus (Mouse).